Consider the following 495-residue polypeptide: Lysine--tRNA ligase (495 aa).

The Mg(2+) site is built by E406 and E413.

The protein belongs to the class-II aminoacyl-tRNA synthetase family. As to quaternary structure, homodimer. It depends on Mg(2+) as a cofactor.

The protein resides in the cytoplasm. It carries out the reaction tRNA(Lys) + L-lysine + ATP = L-lysyl-tRNA(Lys) + AMP + diphosphate. This chain is Lysine--tRNA ligase, found in Leptospira interrogans serogroup Icterohaemorrhagiae serovar copenhageni (strain Fiocruz L1-130).